The primary structure comprises 323 residues: tRNA U34 carboxymethyltransferase (323 aa).

Carboxy-S-adenosyl-L-methionine is bound by residues lysine 91, tryptophan 105, lysine 110, glycine 130, 152–154 (DPS), 181–182 (IE), methionine 196, tyrosine 200, and arginine 315.

It belongs to the class I-like SAM-binding methyltransferase superfamily. CmoB family. In terms of assembly, homotetramer.

The catalysed reaction is carboxy-S-adenosyl-L-methionine + 5-hydroxyuridine(34) in tRNA = 5-carboxymethoxyuridine(34) in tRNA + S-adenosyl-L-homocysteine + H(+). Catalyzes carboxymethyl transfer from carboxy-S-adenosyl-L-methionine (Cx-SAM) to 5-hydroxyuridine (ho5U) to form 5-carboxymethoxyuridine (cmo5U) at position 34 in tRNAs. The polypeptide is tRNA U34 carboxymethyltransferase (Vibrio vulnificus (strain CMCP6)).